Here is a 336-residue protein sequence, read N- to C-terminus: NmrA-like family domain-containing oxidoreductase FrzB (336 aa).

An NADP(+)-binding site is contributed by lysine 135.

Belongs to the NmrA-type oxidoreductase family.

The catalysed reaction is 4-{[(2S,5S)-5-[(4-hydroxyphenyl)methyl]-2,5-dihydropyrazin-2-yl]methyl}phenol + 2 NADPH + 2 H(+) = (S,S)-2,5-di-(p-hydroxybenzyl)piperazine + 2 NADP(+). Its pathway is secondary metabolite biosynthesis. Functionally, nmrA-like family domain-containing oxidoreductase; part of the gene cluster that mediates the biosynthesis of the alkaloid (-)-FR901483, a potent immunosuppressant that shows efficacy in animal models and a probable inhibitor of purine nucleotide biosynthesis by targeting phosphoribosylpyrophosphate amidotransferase (PPAT). Within the pathway, FrzB catalyzes the reduction of 4-{[(2S,5S)-5-[(4-hydroxyphenyl)methyl]-2,5-dihydropyrazin-2-yl]methyl}phenol to produce the (S,S)-dityrosyl-piperazine intermediate. The biosynthesis of (-)-FR901483 starts with the condensation of two L-tyrosines to yield (S,S)-dityrosyl-piperazine. This process occurs in 3 steps with the non-canonical nonribosomal peptide synthetase FrzA catalyzing the reduction of L-tyrosine into L-tyrosinal, the spontaneous condensation of 2 L-tyrosinal units, and the subsequent reduction by the NmrA-like family domain-containing oxidoreductase FrzB. The cytochrome P450 monooxygenase FrzC then performs coupling between N10 and C1' to morph the piperazine into a 1,4-diazabicyclo[3.2.1]octane spiro-fused to a 2,5-cyclohexadienone. The dienone portion is further reduced to cyclohexanone by the flavin-dependent reductase FrzD. The methyltranserases (MTs) FrzE and FrzF are then involved in the methylation at the C10' amine and the C4 phenolic oxygen, respectively. The order of the two MTs appear to be interchangeable. Cleavage of the C9-N10' bond by the dioxygenase FrzG then leads to formation of a conjugated iminium. In addition to the oxidation of C9, an additional dehydrogenation between C7 and C8 can occur to give a likely shunt product. The next biosynthetic step is the intramolecular aldol condensation catalyzed by the newly identified aldolase FrzH to yield an aza-tricyclic product with the formation of a C9-C3' bond. The short-chain dehydrogenase/reductase FrzI then produces dephospho-(-)-FR901483 that is phosphorylated at C4'-OH into (-)-FR901483 by the phosphotransferase FrzJ. This chain is NmrA-like family domain-containing oxidoreductase FrzB, found in Cladobotryum sp.